The sequence spans 284 residues: Nucleotide-binding protein Teth39_0666 (284 aa).

8–15 (GLSGAGKT) contacts ATP. GTP is bound at residue 58 to 61 (DLRG).

Belongs to the RapZ-like family.

In terms of biological role, displays ATPase and GTPase activities. The chain is Nucleotide-binding protein Teth39_0666 from Thermoanaerobacter pseudethanolicus (strain ATCC 33223 / 39E) (Clostridium thermohydrosulfuricum).